The chain runs to 329 residues: tRNA pseudouridine synthase B (329 aa).

Asp42 (nucleophile) is an active-site residue.

Belongs to the pseudouridine synthase TruB family. Type 1 subfamily.

It catalyses the reaction uridine(55) in tRNA = pseudouridine(55) in tRNA. Responsible for synthesis of pseudouridine from uracil-55 in the psi GC loop of transfer RNAs. This chain is tRNA pseudouridine synthase B, found in Lactococcus lactis subsp. lactis (strain IL1403) (Streptococcus lactis).